The chain runs to 306 residues: Putative S-adenosyl-L-methionine-dependent methyltransferase MAV_4442 (306 aa).

S-adenosyl-L-methionine is bound by residues aspartate 129 and 158–159 (DL).

The protein belongs to the UPF0677 family.

In terms of biological role, exhibits S-adenosyl-L-methionine-dependent methyltransferase activity. The protein is Putative S-adenosyl-L-methionine-dependent methyltransferase MAV_4442 of Mycobacterium avium (strain 104).